The sequence spans 609 residues: Albumin (609 aa).

Residues 1-18 (MKWVTFISLLFLFSSAYS) form the signal peptide. Positions 19 to 24 (RGVFRR) are excised as a propeptide. 3 consecutive Albumin domains span residues 19–210 (RGVF…DELR), 211–403 (DEGK…EFKP), and 404–601 (LVEE…KLVA). Histidine 27 provides a ligand contact to Cu cation. Serine 29 bears the Phosphoserine; by FAM20C mark. Glutamate 30 provides a ligand contact to Ca(2+). N-linked (Glc) (glycation) lysine glycosylation is present at lysine 36. Aspartate 37 contacts Ca(2+). Lysine 75 carries an N-linked (Glc) (glycation) lysine; in vitro glycan. Cysteine 77 and cysteine 86 form a disulfide bridge. Phosphoserine; by FAM20C occurs at positions 82 and 89. Histidine 91 contributes to the Zn(2+) binding site. Disulfide bonds link cysteine 99/cysteine 115, cysteine 114/cysteine 125, cysteine 148/cysteine 193, and cysteine 192/cysteine 201. The residue at position 107 (threonine 107) is a Phosphothreonine; by FAM20C. Residues lysine 161 and lysine 186 are each glycosylated (N-linked (Glc) (glycation) lysine; in vitro). Lysine 223 is a glycosylation site (N-linked (Glc) (glycation) lysine; in vitro). 2 disulfide bridges follow: cysteine 224/cysteine 270 and cysteine 269/cysteine 277. Lysine 229 is modified (N6-succinyllysine). Lysine 249 carries an N-linked (Glc) (glycation) lysine; in vitro glycan. An N-linked (Glc) (glycation) lysine glycan is attached at lysine 257. Lysine 264 contributes to the (4Z,15Z)-bilirubin IXalpha binding site. Glutamate 268 is a Ca(2+) binding site. Residues histidine 271 and aspartate 273 each coordinate Zn(2+). Residues aspartate 273, glutamate 276, aspartate 279, and aspartate 283 each coordinate Ca(2+). 2 disulfides stabilise this stretch: cysteine 289–cysteine 303 and cysteine 302–cysteine 313. Phosphoserine is present on serine 297. An N-linked (Glc) (glycation) lysine; in vitro glycan is attached at lysine 300. Residue lysine 305 is glycosylated (N-linked (Glc) (glycation) lysine). A glycan (N-linked (Glc) (glycation) lysine; in vitro) is linked at lysine 337. 2 disulfides stabilise this stretch: cysteine 340/cysteine 385 and cysteine 384/cysteine 393. N-linked (Glc) (glycation) lysine glycosylation is present at lysine 341. N-linked (GlcNAc...) asparagine; in variant Redhill glycosylation occurs at asparagine 342. The N-linked (Glc) (glycation) lysine; in vitro glycan is linked to lysine 347. Lysine 375 is a glycosylation site (N-linked (Glc) (glycation) lysine). Lysine 402 and lysine 437 each carry an N-linked (Glc) (glycation) lysine; in vitro glycan. Intrachain disulfides connect cysteine 416-cysteine 462, cysteine 461-cysteine 472, cysteine 485-cysteine 501, and cysteine 500-cysteine 511. Serine 443 bears the Phosphoserine mark. Phosphothreonine is present on residues threonine 444 and threonine 446. An N6-succinyllysine modification is found at lysine 460. The N-linked (Glc) (glycation) lysine glycan is linked to lysine 463. Lysine 468 is a glycosylation site (N-linked (Glc) (glycation) lysine; in vitro). Serine 513 is modified (phosphoserine). Aspartate 518 carries N-linked (GlcNAc...) asparagine; in variant Casebrook glycosylation. Intrachain disulfides connect cysteine 538–cysteine 583 and cysteine 582–cysteine 591. Residue lysine 543 is modified to N6-succinyllysine. The N-linked (Glc) (glycation) lysine glycan is linked to lysine 549. Lysine 558 is modified (N6-methyllysine; alternate). N-linked (Glc) (glycation) lysine; alternate glycosylation is present at lysine 558. 2 N-linked (Glc) (glycation) lysine; in vitro glycosylation sites follow: lysine 560 and lysine 569. Lysine 588 is subject to N6-succinyllysine. The N-linked (Glc) (glycation) lysine; in vitro glycan is linked to lysine 597.

The protein belongs to the ALB/AFP/VDB family. In terms of assembly, interacts with FCGRT; this interaction regulates ALB homeostasis. Interacts with TASOR. In plasma, occurs in a covalently-linked complex with chromophore-bound alpha-1-microglobulin with molar ratio 1:2 and 1:1; this interaction does not prevent fatty acid binding to ALB. In terms of processing, kenitra variant is partially O-glycosylated at Thr-620. It has two new disulfide bonds Cys-600 to Cys-602 and Cys-601 to Cys-606. Post-translationally, glycated in diabetic patients. Phosphorylated by FAM20C in the extracellular medium. In terms of processing, acetylated on Lys-223 by acetylsalicylic acid. As to expression, plasma.

It localises to the secreted. Functionally, binds water, Ca(2+), Na(+), K(+), fatty acids, hormones, bilirubin and drugs. Its main function is the regulation of the colloidal osmotic pressure of blood. Major zinc transporter in plasma, typically binds about 80% of all plasma zinc. Major calcium and magnesium transporter in plasma, binds approximately 45% of circulating calcium and magnesium in plasma. Potentially has more than two calcium-binding sites and might additionally bind calcium in a non-specific manner. The shared binding site between zinc and calcium at residue Asp-273 suggests a crosstalk between zinc and calcium transport in the blood. The rank order of affinity is zinc &gt; calcium &gt; magnesium. Binds to the bacterial siderophore enterobactin and inhibits enterobactin-mediated iron uptake of E.coli from ferric transferrin, and may thereby limit the utilization of iron and growth of enteric bacteria such as E.coli. Does not prevent iron uptake by the bacterial siderophore aerobactin. The polypeptide is Albumin (ALB) (Homo sapiens (Human)).